Here is a 620-residue protein sequence, read N- to C-terminus: Glutathione-regulated potassium-efflux system protein KefC (620 aa).

12 consecutive transmembrane segments (helical) span residues 4–24 (HTLI…PVAV), 26–46 (LGLG…PWGL), 54–74 (AILH…GLEL), 86–106 (VFGG…GFCV), 114–134 (VALL…MQAM), 149–169 (FAVL…IPLL), 178–198 (ASAF…VVLL), 218–238 (VFSA…EEAG), 271–291 (LLLG…TLVA), 296–316 (VLTL…LVAK), 326–346 (RWFA…FGAA), and 359–379 (ALTL…VLLT). Residues 399–518 (QPRVIIAGFG…AGVAQPERET (120 aa)) form the RCK N-terminal domain. Positions 596 to 620 (HGWQGTREGKHTGNDADEPEVKPQP) are disordered.

It belongs to the monovalent cation:proton antiporter 2 (CPA2) transporter (TC 2.A.37) family. KefC subfamily. In terms of assembly, homodimer. Interacts with the regulatory subunit KefF.

The protein resides in the cell inner membrane. In terms of biological role, pore-forming subunit of a potassium efflux system that confers protection against electrophiles. Catalyzes K(+)/H(+) antiport. This chain is Glutathione-regulated potassium-efflux system protein KefC, found in Cronobacter sakazakii (strain ATCC BAA-894) (Enterobacter sakazakii).